Reading from the N-terminus, the 345-residue chain is 3-isopropylmalate dehydrogenase (345 aa).

Position 74–87 (74–87 (GPKWDGLPRKIRPE)) interacts with NAD(+). Residues Arg94, Arg104, Arg132, and Asp217 each coordinate substrate. Mg(2+) contacts are provided by Asp217, Asp241, and Asp245. Residue 274 to 286 (GSAPDIAGKGLAN) coordinates NAD(+).

Belongs to the isocitrate and isopropylmalate dehydrogenases family. LeuB type 1 subfamily. As to quaternary structure, homodimer. Requires Mg(2+) as cofactor. Mn(2+) is required as a cofactor.

The protein localises to the cytoplasm. It catalyses the reaction (2R,3S)-3-isopropylmalate + NAD(+) = 4-methyl-2-oxopentanoate + CO2 + NADH. The protein operates within amino-acid biosynthesis; L-leucine biosynthesis; L-leucine from 3-methyl-2-oxobutanoate: step 3/4. Catalyzes the oxidation of 3-carboxy-2-hydroxy-4-methylpentanoate (3-isopropylmalate) to 3-carboxy-4-methyl-2-oxopentanoate. The product decarboxylates to 4-methyl-2 oxopentanoate. This chain is 3-isopropylmalate dehydrogenase (leuB), found in Thermus thermophilus (strain ATCC BAA-163 / DSM 7039 / HB27).